Here is a 507-residue protein sequence, read N- to C-terminus: Protein DETOXIFICATION 39 (507 aa).

A run of 12 helical transmembrane segments spans residues 58-78, 92-112, 141-161, 178-198, 209-229, 233-253, 287-307, 318-338, 359-379, 403-423, 433-453, and 459-479; these read VLFR…GMGI, LAAA…MLGM, IVLA…YPIL, IAGL…QKFL, FISA…VYVM, FMGI…SQCF, AVMI…AGLL, SICM…NAAV, WTAT…VIWF, FLAI…VAVG, VNVG…GFTF, and GIWT…LYVT.

This sequence belongs to the multi antimicrobial extrusion (MATE) (TC 2.A.66.1) family.

It localises to the membrane. This Arabidopsis thaliana (Mouse-ear cress) protein is Protein DETOXIFICATION 39.